Here is a 415-residue protein sequence, read N- to C-terminus: Coiled-coil domain-containing glutamate-rich protein 1 (415 aa).

A compositionally biased stretch (basic and acidic residues) spans 1 to 11 (MTQTLDTKEDP). Disordered stretches follow at residues 1 to 20 (MTQTLDTKEDPLNLGGGWAS), 29 to 64 (FGPRRRRGAPVYRRRPRYGPKAEYEPPRKQAKQQYG), 133 to 162 (RPPGRKKRWGRRGRGLRRHPRRSAQRSPPV), 202 to 241 (QEKLERQQEALRAQQAQAASTASPEGAFGNDVPPSGGQED), and 255 to 372 (PSLV…PLEM). Composition is skewed to basic residues over residues 31-46 (PRRRRGAPVYRRRPRY) and 135-156 (PGRKKRWGRRGRGLRRHPRRSA). Coiled-coil stretches lie at residues 197 to 224 (EDMRQQEKLERQQEALRAQQAQAASTAS) and 264 to 366 (DEEK…EEEN). Residues 211–220 (ALRAQQAQAA) are compositionally biased toward low complexity. The span at 275–363 (VEEEEEGERE…EGLAEDEQTE (89 aa)) shows a compositional bias: acidic residues.

It localises to the nucleus. Its function is as follows. Regulator of histone epigenetic modifications and chromatin compaction into the sperm head, required for histone-to-protamine (HTP) transition. HTP is a key event in which somatic histones are first replaced by testis-specific histone variants, then transition proteins (TNPs) are incorporated into the spermatid nucleus, and finally protamines (PRMs) replace the TNPs to promote chromatin condensation. The protein is Coiled-coil domain-containing glutamate-rich protein 1 (CCER1) of Bos taurus (Bovine).